The chain runs to 221 residues: 7-cyano-7-deazaguanine synthase (221 aa).

10–20 (LSGGLDSTTCM) is an ATP binding site. The Zn(2+) site is built by Cys188, Cys196, Cys199, and Cys202.

It belongs to the QueC family. As to quaternary structure, homodimer. Requires Zn(2+) as cofactor.

The catalysed reaction is 7-carboxy-7-deazaguanine + NH4(+) + ATP = 7-cyano-7-deazaguanine + ADP + phosphate + H2O + H(+). It functions in the pathway purine metabolism; 7-cyano-7-deazaguanine biosynthesis. Catalyzes the ATP-dependent conversion of 7-carboxy-7-deazaguanine (CDG) to 7-cyano-7-deazaguanine (preQ(0)). The chain is 7-cyano-7-deazaguanine synthase from Oceanobacillus iheyensis (strain DSM 14371 / CIP 107618 / JCM 11309 / KCTC 3954 / HTE831).